The chain runs to 148 residues: SsrA-binding protein (148 aa).

Residues 119–148 form a disordered region; it reads AKGKKQHDKRETEKKRDWEREKARLMRSPG. Positions 126 to 142 are enriched in basic and acidic residues; it reads DKRETEKKRDWEREKAR.

The protein belongs to the SmpB family.

It is found in the cytoplasm. In terms of biological role, required for rescue of stalled ribosomes mediated by trans-translation. Binds to transfer-messenger RNA (tmRNA), required for stable association of tmRNA with ribosomes. tmRNA and SmpB together mimic tRNA shape, replacing the anticodon stem-loop with SmpB. tmRNA is encoded by the ssrA gene; the 2 termini fold to resemble tRNA(Ala) and it encodes a 'tag peptide', a short internal open reading frame. During trans-translation Ala-aminoacylated tmRNA acts like a tRNA, entering the A-site of stalled ribosomes, displacing the stalled mRNA. The ribosome then switches to translate the ORF on the tmRNA; the nascent peptide is terminated with the 'tag peptide' encoded by the tmRNA and targeted for degradation. The ribosome is freed to recommence translation, which seems to be the essential function of trans-translation. The protein is SsrA-binding protein of Paraburkholderia xenovorans (strain LB400).